A 185-amino-acid chain; its full sequence is Ribosome-recycling factor (185 aa).

This sequence belongs to the RRF family.

It localises to the cytoplasm. Responsible for the release of ribosomes from messenger RNA at the termination of protein biosynthesis. May increase the efficiency of translation by recycling ribosomes from one round of translation to another. This chain is Ribosome-recycling factor, found in Haemophilus ducreyi (strain 35000HP / ATCC 700724).